The primary structure comprises 366 residues: tRNA-specific 2-thiouridylase MnmA (366 aa).

ATP-binding positions include 6–13 and L32; that span reads AMSGGVDS. The active-site Nucleophile is C101. Cysteines 101 and 198 form a disulfide. G125 provides a ligand contact to ATP. Positions 148–150 are interaction with tRNA; it reads KDQ. C198 acts as the Cysteine persulfide intermediate in catalysis.

This sequence belongs to the MnmA/TRMU family.

Its subcellular location is the cytoplasm. The enzyme catalyses S-sulfanyl-L-cysteinyl-[protein] + uridine(34) in tRNA + AH2 + ATP = 2-thiouridine(34) in tRNA + L-cysteinyl-[protein] + A + AMP + diphosphate + H(+). Its function is as follows. Catalyzes the 2-thiolation of uridine at the wobble position (U34) of tRNA, leading to the formation of s(2)U34. This Nocardioides sp. (strain ATCC BAA-499 / JS614) protein is tRNA-specific 2-thiouridylase MnmA.